Here is a 383-residue protein sequence, read N- to C-terminus: ATP phosphoribosyltransferase regulatory subunit (383 aa).

The protein belongs to the class-II aminoacyl-tRNA synthetase family. HisZ subfamily. Heteromultimer composed of HisG and HisZ subunits.

The protein resides in the cytoplasm. It participates in amino-acid biosynthesis; L-histidine biosynthesis; L-histidine from 5-phospho-alpha-D-ribose 1-diphosphate: step 1/9. Required for the first step of histidine biosynthesis. May allow the feedback regulation of ATP phosphoribosyltransferase activity by histidine. This is ATP phosphoribosyltransferase regulatory subunit from Cupriavidus necator (strain ATCC 17699 / DSM 428 / KCTC 22496 / NCIMB 10442 / H16 / Stanier 337) (Ralstonia eutropha).